Consider the following 81-residue polypeptide: Photosystem I iron-sulfur center (81 aa).

4Fe-4S ferredoxin-type domains are found at residues 2–31 (SHAVKIYDTCIGCTQCVRACPLDVLEMVPW) and 39–68 (IASSPRTEDCVGCKRCETACPTDFLSIRVY). Cys-11, Cys-14, Cys-17, Cys-21, Cys-48, Cys-51, Cys-54, and Cys-58 together coordinate [4Fe-4S] cluster.

As to quaternary structure, the cyanobacterial PSI reaction center is composed of one copy each of PsaA,B,C,D,E,F,I,J,K,L,M and X, and forms trimeric complexes. [4Fe-4S] cluster serves as cofactor.

It is found in the cellular thylakoid membrane. The enzyme catalyses reduced [plastocyanin] + hnu + oxidized [2Fe-2S]-[ferredoxin] = oxidized [plastocyanin] + reduced [2Fe-2S]-[ferredoxin]. Apoprotein for the two 4Fe-4S centers FA and FB of photosystem I (PSI); essential for photochemical activity. FB is the terminal electron acceptor of PSI, donating electrons to ferredoxin. The C-terminus interacts with PsaA/B/D and helps assemble the protein into the PSI complex. Required for binding of PsaD and PsaE to PSI. PSI is a plastocyanin/cytochrome c6-ferredoxin oxidoreductase, converting photonic excitation into a charge separation, which transfers an electron from the donor P700 chlorophyll pair to the spectroscopically characterized acceptors A0, A1, FX, FA and FB in turn. This is Photosystem I iron-sulfur center from Prochlorococcus marinus (strain MIT 9211).